Consider the following 203-residue polypeptide: Xrcc4-like factor 1 (203 aa).

Belongs to the XRCC4-XLF family. XLF subfamily.

Its subcellular location is the nucleus. Functionally, involved in double-strand break repair via non-homologous end joining (NHEJ); the repair of a double-strand break in DNA in which the two broken ends are rejoined with little or no sequence complementarity. Has a role in meiosis. This is Xrcc4-like factor 1 (xlf1) from Schizosaccharomyces pombe (strain 972 / ATCC 24843) (Fission yeast).